A 340-amino-acid chain; its full sequence is Phosphoribosylformylglycinamidine cyclo-ligase (340 aa).

Belongs to the AIR synthase family.

It localises to the cytoplasm. It carries out the reaction 2-formamido-N(1)-(5-O-phospho-beta-D-ribosyl)acetamidine + ATP = 5-amino-1-(5-phospho-beta-D-ribosyl)imidazole + ADP + phosphate + H(+). It functions in the pathway purine metabolism; IMP biosynthesis via de novo pathway; 5-amino-1-(5-phospho-D-ribosyl)imidazole from N(2)-formyl-N(1)-(5-phospho-D-ribosyl)glycinamide: step 2/2. The polypeptide is Phosphoribosylformylglycinamidine cyclo-ligase (Streptococcus pneumoniae serotype 4 (strain ATCC BAA-334 / TIGR4)).